A 264-amino-acid polypeptide reads, in one-letter code: Thymidylate synthase (264 aa).

R21 is a dUMP binding site. H51 is a (6R)-5,10-methylene-5,6,7,8-tetrahydrofolate binding site. 126–127 is a binding site for dUMP; the sequence is RR. The Nucleophile role is filled by C146. DUMP contacts are provided by residues 166–169, N177, and 207–209; these read RSCD and HLY. Residue D169 participates in (6R)-5,10-methylene-5,6,7,8-tetrahydrofolate binding. A263 is a (6R)-5,10-methylene-5,6,7,8-tetrahydrofolate binding site.

Belongs to the thymidylate synthase family. Bacterial-type ThyA subfamily. In terms of assembly, homodimer.

Its subcellular location is the cytoplasm. It carries out the reaction dUMP + (6R)-5,10-methylene-5,6,7,8-tetrahydrofolate = 7,8-dihydrofolate + dTMP. It participates in pyrimidine metabolism; dTTP biosynthesis. Functionally, catalyzes the reductive methylation of 2'-deoxyuridine-5'-monophosphate (dUMP) to 2'-deoxythymidine-5'-monophosphate (dTMP) while utilizing 5,10-methylenetetrahydrofolate (mTHF) as the methyl donor and reductant in the reaction, yielding dihydrofolate (DHF) as a by-product. This enzymatic reaction provides an intracellular de novo source of dTMP, an essential precursor for DNA biosynthesis. The protein is Thymidylate synthase of Aeromonas salmonicida (strain A449).